A 150-amino-acid chain; its full sequence is 3-hydroxyacyl-[acyl-carrier-protein] dehydratase FabZ (150 aa).

Residue histidine 51 is part of the active site.

It belongs to the thioester dehydratase family. FabZ subfamily.

It localises to the cytoplasm. It carries out the reaction a (3R)-hydroxyacyl-[ACP] = a (2E)-enoyl-[ACP] + H2O. Its function is as follows. Involved in unsaturated fatty acids biosynthesis. Catalyzes the dehydration of short chain beta-hydroxyacyl-ACPs and long chain saturated and unsaturated beta-hydroxyacyl-ACPs. The chain is 3-hydroxyacyl-[acyl-carrier-protein] dehydratase FabZ from Legionella pneumophila (strain Paris).